The primary structure comprises 264 residues: Polyneuridine aldehyde esterase (264 aa).

The propeptide occupies 1-6 (MHSAAN). Positions 12-122 (HFVLVHGGCL…MMPDPNHSLT (111 aa)) constitute an AB hydrolase-1 domain. Catalysis depends on residues Ser-87, Asp-216, and His-244. Ser-87 contributes to the 16-epivellosimine binding site.

It belongs to the AB hydrolase superfamily. In terms of assembly, homodimer; homodimerizes in aqueous solutions at pH 7.0. In terms of tissue distribution, mainly expressed in roots and, to a lower level, in leaves.

The enzyme catalyses polyneuridine aldehyde + H2O = 16-epivellosimine + methanol + CO2. The protein operates within alkaloid biosynthesis; ajmaline biosynthesis. Inhibited by DEPC and HgCl(2). Its function is as follows. Hydrolase involved in the biosynthesis of ajmaline-type monoterpenoid indole alkaloids (MIAs) natural products, important plant-derived pharmaceuticals used in the therapy of heart disorders. Catalyzes the hydrolysis of polyneuridine aldehyde into epi-vellosimine, precursor of vomilenine, an intermediate chemical in the biosynthesis of ajmaline. This chain is Polyneuridine aldehyde esterase, found in Rauvolfia serpentina (Serpentine wood).